A 777-amino-acid polypeptide reads, in one-letter code: MEVHIGLGGVYKQPPGKMIRGAFENLFLSVREALQGERRSAASLDTSSPISACVHPHPTWNEPSTWTEVRGTPWREPQGAQPDPPPCSPRSQAPQFTLSSCTTELKEILGEQGGMPEEGNSESASKEGYPESISDSAKEICKAVSVSLGLSMEALEHLSAAGEWQRGDCMFAGPPHHTMGAQTCQVAEEDKSDTSFSQYREGAFRRAGQSTYSAGKAPEDGSSLPTEDKEQPCTDMALSEPGSLRSRGMEVMPSLTLYKPTAFMEDASAYPGRDYYSFQMALAPHGRIKVESPIEFAGSAWGGPSRYSEFPGFSHCGPSANWHSLFEEGQATASYTDSSLYSYPRSHVPAGPDGEFSAEAWYPATAMLGRVHMAVPMRPRMTHGWTATLGIRRRLGWTGVESTFYPIDYYFPPQKPCLSCEDEASGCHYEALTCGSCKVFFKRAAEGNQKYLCASRNDCTIDKFRRKNCPSCRLRKCYEAGMTLGARKLKKLGNLKAQEELEGSPGQSEGREMPPNMSIPQLEGYSCQPIFLNVLEAIEPMVVCSGHDNNQPDSFALLLSSLNELGERQLVHVVKWAKALPGFRNLHVNDQMTVIQYSWMGLMIFAMGWRSFKNVNSRMLYFAPDLVFNEYRMHKSRMYSQCVRMRHLSQEFGWLQVTPEEFLCDEGPSALSIIPVEGLKDQKCFDELRMNYIKELDRVISCKRNNPASSSPRFFNLPKLLGSVQPIDVNLVQFTFGLFGKAQMVSVDFPEMMSEIISVQVPKILSGRVKPLYFHSS.

A modulating region spans residues 1-416; sequence MEVHIGLGGV…IDYYFPPQKP (416 aa). Disordered regions lie at residues 53–95, 110–132, and 205–241; these read CVHP…QAPQ, GEQG…YPES, and RRAG…LSEP. 2 consecutive NR C4-type zinc fingers follow at residues 417–434 and 453–472; these read CLSC…ALTC and CASR…CPSC. The segment at residues 417 to 489 is a DNA-binding region (nuclear receptor); it reads CLSCEDEASG…AGMTLGARKL (73 aa). The region spanning 526 to 757 is the NR LBD domain; that stretch reads SCQPIFLNVL…DFPEMMSEII (232 aa). The 17beta-hydroxy-5alpha-androstan-3-one site is built by N563, R610, and T735.

The protein belongs to the nuclear hormone receptor family. NR3 subfamily. As to quaternary structure, binds DNA as a homodimer. Interacts via the ligand-binding domain with LXXLL and FXXLF motifs from coactivator proteins. Interacts (via ligand-binding domain) with TRIM68. In terms of tissue distribution, detected in somatic Leydig and Sertoli cells in testis with high level expression. Also detected at lower expression levels in forebrain and heart.

The protein resides in the nucleus. It localises to the cytoplasm. In terms of biological role, steroid hormone receptors are ligand-activated transcription factors that regulate eukaryotic gene expression and affect cellular proliferation and differentiation in target tissues. Transcription factor activity is modulated by bound coactivator and corepressor proteins. The chain is Androgen receptor (ar) from Aquarana catesbeiana (American bullfrog).